The primary structure comprises 471 residues: Probable pyruvate, phosphate dikinase regulatory protein, chloroplastic (471 aa).

A chloroplast-targeting transit peptide spans 1-49 (MSSSSSTSPRFGSMISAKLASPPPSLLLPPSPRLQGRRLTPPSCTPGTP). The interval 1–133 (MSSSSSTSPR…PHPSSDEAAS (133 aa)) is disordered. Residues 21-32 (SPPPSLLLPPSP) show a composition bias toward pro residues. Residues 71 to 88 (GSATTPRSPAQLGSSQLH) are compositionally biased toward polar residues. Over residues 89-99 (RWSRARAHRSG) the composition is skewed to basic residues. Residues 100–111 (RRLEWPTIRDRG) are compositionally biased toward basic and acidic residues. 171–178 (HSVNAALG) is an ADP binding site.

The protein belongs to the pyruvate, phosphate/water dikinase regulatory protein family. PDRP subfamily.

The protein localises to the plastid. The protein resides in the chloroplast. The catalysed reaction is N(tele)-phospho-L-histidyl/L-threonyl-[pyruvate, phosphate dikinase] + ADP = N(tele)-phospho-L-histidyl/O-phospho-L-threonyl-[pyruvate, phosphate dikinase] + AMP + H(+). It catalyses the reaction N(tele)-phospho-L-histidyl/O-phospho-L-threonyl-[pyruvate, phosphate dikinase] + phosphate + H(+) = N(tele)-phospho-L-histidyl/L-threonyl-[pyruvate, phosphate dikinase] + diphosphate. Its activity is regulated as follows. Regulated by light/dark exposure. Its function is as follows. Bifunctional serine/threonine kinase and phosphorylase involved in the dark/light-mediated regulation of PPDK by catalyzing its phosphorylation/dephosphorylation. Dark/light-induced changes in stromal concentrations of the competing ADP and Pi substrates govern the direction of the reaction. In the dark, phosphorylates the catalytic intermediate of PPDK (PPDK-HisP), inactivating it. Light exposure induces the phosphorolysis reaction that reactivates PPDK. The chain is Probable pyruvate, phosphate dikinase regulatory protein, chloroplastic (PDRP1) from Oryza sativa subsp. indica (Rice).